The following is a 382-amino-acid chain: tRNA (guanine(26)-N(2))-dimethyltransferase (382 aa).

One can recognise a Trm1 methyltransferase domain in the interval 4–370 (TEVIEGKARL…REFSEILECV (367 aa)). S-adenosyl-L-methionine contacts are provided by Arg44, Arg69, Asp87, Asp113, and Ala114. The Zn(2+) site is built by Cys244, Cys247, Cys261, and Cys264.

The protein belongs to the class I-like SAM-binding methyltransferase superfamily. Trm1 family.

It carries out the reaction guanosine(26) in tRNA + 2 S-adenosyl-L-methionine = N(2)-dimethylguanosine(26) in tRNA + 2 S-adenosyl-L-homocysteine + 2 H(+). Dimethylates a single guanine residue at position 26 of a number of tRNAs using S-adenosyl-L-methionine as donor of the methyl groups. This is tRNA (guanine(26)-N(2))-dimethyltransferase from Metallosphaera sedula (strain ATCC 51363 / DSM 5348 / JCM 9185 / NBRC 15509 / TH2).